An 883-amino-acid chain; its full sequence is Valine--tRNA ligase (883 aa).

The 'HIGH' region motif lies at 50–60 (PNVTGKLHMGH). A 'KMSKS' region motif is present at residues 527-531 (KMSKS). Lys530 contributes to the ATP binding site. The stretch at 811–883 (LNELIDLDEE…KQRLEQLQRA (73 aa)) forms a coiled coil. Positions 859–883 (QRTKRSDFEDQLTSTKQRLEQLQRA) are disordered.

Belongs to the class-I aminoacyl-tRNA synthetase family. ValS type 1 subfamily. As to quaternary structure, monomer.

The protein localises to the cytoplasm. The enzyme catalyses tRNA(Val) + L-valine + ATP = L-valyl-tRNA(Val) + AMP + diphosphate. Its function is as follows. Catalyzes the attachment of valine to tRNA(Val). As ValRS can inadvertently accommodate and process structurally similar amino acids such as threonine, to avoid such errors, it has a 'posttransfer' editing activity that hydrolyzes mischarged Thr-tRNA(Val) in a tRNA-dependent manner. The chain is Valine--tRNA ligase from Lacticaseibacillus casei (Lactobacillus casei).